Reading from the N-terminus, the 489-residue chain is ERO1-like protein alpha (489 aa).

The first 20 residues, Met-1–Ala-20, serve as a signal peptide directing secretion. 8 disulfide bridges follow: Cys-27-Cys-40, Cys-29-Cys-38, Cys-77-Cys-382, Cys-86-Cys-91, Cys-86-Cys-123, Cys-91-Cys-96, Cys-200-Cys-232, and Cys-385-Cys-388. Arg-179, Thr-181, and Trp-192 together coordinate FAD. FAD is bound by residues Ser-243 and His-246. Asn-271 carries N-linked (GlcNAc...) asparagine glycosylation. Positions 278 and 291 each coordinate FAD. Asn-375 carries an N-linked (GlcNAc...) asparagine glycan.

Belongs to the EROs family. In terms of assembly, predominantly monomer. May function both as a monomer and a homodimer. FAD is required as a cofactor. Post-translationally, the Cys-86/Cys-91 and Cys-385/Cys-388 disulfide bonds constitute the redox-active center. The Cys-86/Cys-91 disulfide bond may accept electron from protein disulfide isomerase (PDI) and funnel them to the active site disulfide Cys-385/Cys-388.

Its subcellular location is the endoplasmic reticulum membrane. Its activity is regulated as follows. Enzyme activity is tightly regulated to prevent the accumulation of reactive oxygen species in the endoplasmic reticulum. Reversibly down-regulated by the formation of disulfide bonds between the active site Cys-86 and Cys-123, and between Cys-91 and Cys-96. Glutathione may be required to regulate its activity in the endoplasmic reticulum. Its function is as follows. Oxidoreductase involved in disulfide bond formation in the endoplasmic reticulum. Efficiently reoxidizes P4HB/PDI, the enzyme catalyzing protein disulfide formation, in order to allow P4HB to sustain additional rounds of disulfide formation. Following P4HB reoxidation, passes its electrons to molecular oxygen via FAD, leading to the production of reactive oxygen species (ROS) in the cell. Required for the folding of immunoglobulins. This Danio rerio (Zebrafish) protein is ERO1-like protein alpha.